A 402-amino-acid chain; its full sequence is Fugralins biosynthesis cluster protein 2 (402 aa).

Helical transmembrane passes span 28-48 (NCLA…CFLL), 109-129 (ILIF…AILV), 145-165 (IFWW…TAIV), 232-252 (VIFG…AVTV), and 264-284 (LAPL…IVCV). Disordered stretches follow at residues 312–335 (NPNT…TGPK) and 378–402 (TQDN…PWGV). Polar residues predominate over residues 324–334 (TKGSQLSSTGP). A glycan (N-linked (GlcNAc...) asparagine) is linked at Asn-381.

The protein belongs to the SAT4 family.

The protein resides in the membrane. The protein operates within secondary metabolite biosynthesis. Functionally, part of the gene cluster that mediates the biosynthesis of the tetraketides fugralins such as linear fugralin A and cyclic fugralin B, volatile compounds that play a role in the asexual reproductive cycle but are not involved in pathogenicity. One of the key features of fugralins is the presence of a double methyl group, which is only rarely encountered in fungal secondary metabolites. As the fugralins cluster does not contain an independent methyltransferase, the PKS FGR1 is probably responsible for adding two methyl groups to the same carbon atom. Fugralin B is similar to fugralin A except for a cyclization between the carboxylic acid C-8 and the alcohol on C-4 resulting in a six membered lactone ring, probably catalyzed by the cyclase FGR4. The exact role of the individual cluster genes remains unknown and further work is needed to unravel the biosynthetic pathway. This is Fugralins biosynthesis cluster protein 2 from Gibberella zeae (strain ATCC MYA-4620 / CBS 123657 / FGSC 9075 / NRRL 31084 / PH-1) (Wheat head blight fungus).